Here is a 270-residue protein sequence, read N- to C-terminus: Putative phosphoenolpyruvate synthase regulatory protein (270 aa).

Residue 151–158 participates in ADP binding; the sequence is GVSRCGKT.

It belongs to the pyruvate, phosphate/water dikinase regulatory protein family. PSRP subfamily.

The catalysed reaction is [pyruvate, water dikinase] + ADP = [pyruvate, water dikinase]-phosphate + AMP + H(+). The enzyme catalyses [pyruvate, water dikinase]-phosphate + phosphate + H(+) = [pyruvate, water dikinase] + diphosphate. Its function is as follows. Bifunctional serine/threonine kinase and phosphorylase involved in the regulation of the phosphoenolpyruvate synthase (PEPS) by catalyzing its phosphorylation/dephosphorylation. This chain is Putative phosphoenolpyruvate synthase regulatory protein, found in Methylobacillus flagellatus (strain ATCC 51484 / DSM 6875 / VKM B-1610 / KT).